The chain runs to 486 residues: UDP-N-acetylmuramate--L-alanine ligase (486 aa).

126-132 contacts ATP; it reads GTHGKTT.

The protein belongs to the MurCDEF family.

Its subcellular location is the cytoplasm. It carries out the reaction UDP-N-acetyl-alpha-D-muramate + L-alanine + ATP = UDP-N-acetyl-alpha-D-muramoyl-L-alanine + ADP + phosphate + H(+). It functions in the pathway cell wall biogenesis; peptidoglycan biosynthesis. Cell wall formation. The protein is UDP-N-acetylmuramate--L-alanine ligase of Pectobacterium carotovorum subsp. carotovorum (strain PC1).